Consider the following 149-residue polypeptide: Arginine repressor (149 aa).

This sequence belongs to the ArgR family.

The protein localises to the cytoplasm. Its pathway is amino-acid biosynthesis; L-arginine biosynthesis [regulation]. Its function is as follows. Regulates arginine biosynthesis genes. The chain is Arginine repressor from Alkaliphilus oremlandii (strain OhILAs) (Clostridium oremlandii (strain OhILAs)).